The primary structure comprises 215 residues: Pyridoxine/pyridoxamine 5'-phosphate oxidase (215 aa).

Substrate contacts are provided by residues Arg-11–Tyr-14 and Lys-69. Residues Arg-64–Lys-69, Tyr-79–Thr-80, Lys-86, and Gln-108 contribute to the FMN site. Residues Tyr-126, Arg-130, and Ser-134 each coordinate substrate. FMN contacts are provided by residues Gln-143–Ser-144 and Trp-188. Residue Arg-194–His-196 coordinates substrate. Arg-198 contacts FMN.

It belongs to the pyridoxamine 5'-phosphate oxidase family. Homodimer. It depends on FMN as a cofactor.

The enzyme catalyses pyridoxamine 5'-phosphate + O2 + H2O = pyridoxal 5'-phosphate + H2O2 + NH4(+). It carries out the reaction pyridoxine 5'-phosphate + O2 = pyridoxal 5'-phosphate + H2O2. Its pathway is cofactor metabolism; pyridoxal 5'-phosphate salvage; pyridoxal 5'-phosphate from pyridoxamine 5'-phosphate: step 1/1. The protein operates within cofactor metabolism; pyridoxal 5'-phosphate salvage; pyridoxal 5'-phosphate from pyridoxine 5'-phosphate: step 1/1. Its function is as follows. Catalyzes the oxidation of either pyridoxine 5'-phosphate (PNP) or pyridoxamine 5'-phosphate (PMP) into pyridoxal 5'-phosphate (PLP). This Legionella pneumophila (strain Paris) protein is Pyridoxine/pyridoxamine 5'-phosphate oxidase.